Reading from the N-terminus, the 265-residue chain is Deoxycytidine kinase 2 (265 aa).

31 to 39 (GNIAAGKST) contacts ATP. Residues Glu-56, Tyr-89, and Gln-100 each coordinate substrate. Residue Glu-130 is the Proton acceptor of the active site. Residues Arg-131 and Asp-136 each coordinate substrate. 191 to 195 (RLQKR) contributes to the ATP binding site. Glu-200 lines the substrate pocket. Residue 243–245 (EDF) participates in ATP binding.

Belongs to the DCK/DGK family. As to quaternary structure, homodimer. As to expression, expressed at high levels in adult intestine, spleen, thymus and testis with lower levels in skeletal muscle and eye. In the embryo, expressed at higher levels until day 10 with lower levels in later stages.

The protein localises to the nucleus. It catalyses the reaction 2'-deoxycytidine + a ribonucleoside 5'-triphosphate = dCMP + a ribonucleoside 5'-diphosphate + H(+). The catalysed reaction is 2'-deoxyguanosine + ATP = dGMP + ADP + H(+). The enzyme catalyses 2'-deoxyadenosine + ATP = dAMP + ADP + H(+). Phosphorylates the deoxyribonucleosides deoxyadenosine, deoxycytidine and deoxyguanosine. Shows highest activity against deoxyguanosine followed by deoxycytidine and then deoxyadenosine. Shows only very minor activity against deoxyuridine and deoxythymidine. This is Deoxycytidine kinase 2 from Gallus gallus (Chicken).